The chain runs to 372 residues: MRSKVTGAKRWVVKIGSALLTADGKGLDRGAMAVWVEQMVALREAGVELVLVSSGAVAAGMSQLGWTKRPSAMNELQAAASLGQMRLVQAWESSFGEHGKHTAQILLTHDDLSDRKRYLNARSTLRTLVDLGVVPVINENDTVVTDEIRFGDNDTLAALVANLVEADLLVILTDRDGMFDADPRNNPEAQLIYEARADDPSLDAVAGGTGGALGRGGMQTKLRAARLAARSGAHTIIIGGRIERVLDRLKAGERLGTLLSPERGMLAARKQWLAGHLQTRGTLVLDAGAVQALRQANKSLLPVGVKTVQGSFRRGEMVVCVGPDGVEVARGLANYSALEAQKIIGQSSEAIESILGYSAEPELVHRDNLVLV.

Lys-14 lines the ATP pocket. Substrate-binding residues include Ser-54, Asp-141, and Asn-153. Residue 173 to 174 coordinates ATP; sequence TD. The PUA domain maps to 280 to 358; it reads RGTLVLDAGA…EAIESILGYS (79 aa).

The protein belongs to the glutamate 5-kinase family.

It is found in the cytoplasm. The catalysed reaction is L-glutamate + ATP = L-glutamyl 5-phosphate + ADP. Its pathway is amino-acid biosynthesis; L-proline biosynthesis; L-glutamate 5-semialdehyde from L-glutamate: step 1/2. In terms of biological role, catalyzes the transfer of a phosphate group to glutamate to form L-glutamate 5-phosphate. The chain is Glutamate 5-kinase from Pseudomonas putida (strain ATCC 700007 / DSM 6899 / JCM 31910 / BCRC 17059 / LMG 24140 / F1).